The following is a 157-amino-acid chain: SsrA-binding protein (157 aa).

Basic and acidic residues predominate over residues 136–151 (KRETSAKRDWSREKQR). The tract at residues 136–157 (KRETSAKRDWSREKQRLLKQNS) is disordered.

It belongs to the SmpB family.

It localises to the cytoplasm. Functionally, required for rescue of stalled ribosomes mediated by trans-translation. Binds to transfer-messenger RNA (tmRNA), required for stable association of tmRNA with ribosomes. tmRNA and SmpB together mimic tRNA shape, replacing the anticodon stem-loop with SmpB. tmRNA is encoded by the ssrA gene; the 2 termini fold to resemble tRNA(Ala) and it encodes a 'tag peptide', a short internal open reading frame. During trans-translation Ala-aminoacylated tmRNA acts like a tRNA, entering the A-site of stalled ribosomes, displacing the stalled mRNA. The ribosome then switches to translate the ORF on the tmRNA; the nascent peptide is terminated with the 'tag peptide' encoded by the tmRNA and targeted for degradation. The ribosome is freed to recommence translation, which seems to be the essential function of trans-translation. The sequence is that of SsrA-binding protein from Cereibacter sphaeroides (strain ATCC 17029 / ATH 2.4.9) (Rhodobacter sphaeroides).